The chain runs to 859 residues: Kinesin-like protein KIN-14T (859 aa).

Residues 91–411 (NIRVFCRVKP…LNFATRAKNI (321 aa)) enclose the Kinesin motor domain. 168–175 (GQTGTGKT) provides a ligand contact to ATP. A coiled-coil region spans residues 422 to 463 (QAKKEAVMMNLQKMMEKIEQEREMSLRKMRNLNETLEKLTGK). Residues 511-530 (LSGADFSVTPNSSSFKSRRN) form a disordered region. Positions 518–530 (VTPNSSSFKSRRN) are enriched in polar residues.

The protein belongs to the TRAFAC class myosin-kinesin ATPase superfamily. Kinesin family. KIN-14 subfamily.

This chain is Kinesin-like protein KIN-14T, found in Arabidopsis thaliana (Mouse-ear cress).